The primary structure comprises 142 residues: ATP synthase epsilon chain (142 aa).

This sequence belongs to the ATPase epsilon chain family. As to quaternary structure, F-type ATPases have 2 components, CF(1) - the catalytic core - and CF(0) - the membrane proton channel. CF(1) has five subunits: alpha(3), beta(3), gamma(1), delta(1), epsilon(1). CF(0) has three main subunits: a, b and c.

The protein localises to the cell inner membrane. Functionally, produces ATP from ADP in the presence of a proton gradient across the membrane. The sequence is that of ATP synthase epsilon chain from Shewanella baltica (strain OS185).